Reading from the N-terminus, the 458-residue chain is MELPLGRCDDSRTWDDDSDPESETDPDAQAKAYVARVLSPPKSGLAFSRPSQLSTPAASPSASEPRAASRVSAVSEPGLLSLPPELLLEICSYLDARLVLHVLSRVCHALRDLVSDHVTWRLRALRRVRAPYPVVEEKNFDWPAACIALEQHLSRWAEDGRWVEYFCLAEGHVASVDSVLLLQGGSLCLSGSRDRNVNLWDLRQLGTESNQVLIKTLGTKRNSTHEGWVWSLAAQDHRVCSGSWDSTVKLWDMAADGQQFGEIKASSAVLCLSYLPDILVTGTYDKKVTIYDPRAGPALLKHQQLHSRPVLTLLADDRHIISGSEDHTLVVVDRRANSVLQRLQLDSYLLCMSYQEPQLWAGDNQGLLHVFANRNGCFQLIRSFDVGHSFPITGIQYSVGALYTTSTDKTIRVHVPTDPPRTICTRRHDNGLNRVCAEGNLVVAGSGDLSLEVWRLQA.

Met1 carries the N-acetylmethionine modification. 2 disordered regions span residues 1 to 30 (MELP…DAQA) and 42 to 64 (KSGL…SASE). The segment covering 16 to 26 (DDSDPESETDP) has biased composition (acidic residues). Ser18 is modified (phosphoserine). Position 55 is a phosphothreonine (Thr55). At Ser59 the chain carries Phosphoserine. In terms of domain architecture, F-box spans 76-123 (EPGLLSLPPELLLEICSYLDARLVLHVLSRVCHALRDLVSDHVTWRLR). WD repeat units lie at residues 171–210 (GHVA…TESN), 220–261 (KRNS…QQFG), 264–301 (KASS…ALLK), 305–342 (LHSR…VLQR), 344–381 (QLDS…FQLI), 387–424 (GHSF…RTIC), and 427–458 (RHDN…RLQA).

In terms of assembly, interacts with SKP1 and CUL1.

Functionally, substrate-recognition component of the SCF (SKP1-CUL1-F-box protein)-type E3 ubiquitin ligase complex. The sequence is that of F-box/WD repeat-containing protein 9 (FBXW9) from Homo sapiens (Human).